The primary structure comprises 471 residues: ATP synthase subunit beta (471 aa).

156–163 (GGAGVGKT) contacts ATP.

This sequence belongs to the ATPase alpha/beta chains family. In terms of assembly, F-type ATPases have 2 components, CF(1) - the catalytic core - and CF(0) - the membrane proton channel. CF(1) has five subunits: alpha(3), beta(3), gamma(1), delta(1), epsilon(1). CF(0) has three main subunits: a(1), b(2) and c(9-12). The alpha and beta chains form an alternating ring which encloses part of the gamma chain. CF(1) is attached to CF(0) by a central stalk formed by the gamma and epsilon chains, while a peripheral stalk is formed by the delta and b chains.

The protein resides in the cell membrane. The catalysed reaction is ATP + H2O + 4 H(+)(in) = ADP + phosphate + 5 H(+)(out). Produces ATP from ADP in the presence of a proton gradient across the membrane. The catalytic sites are hosted primarily by the beta subunits. The sequence is that of ATP synthase subunit beta from Mycoplasmoides gallisepticum (strain R(low / passage 15 / clone 2)) (Mycoplasma gallisepticum).